The primary structure comprises 2845 residues: Multiple epidermal growth factor-like domains protein 8 (2845 aa).

Residues 1-27 (MALGKVLAMALVLALAVLGSLSPGARA) form the signal peptide. Residues 28–2647 (GDCKGQRQVL…FFRQDQAHID (2620 aa)) lie on the Extracellular side of the membrane. 6 disulfide bridges follow: C30–C57, C142–C152, C146–C158, C174–C184, C178–C191, and C193–C202. Positions 30 to 140 (CKGQRQVLRE…LGFNASFRFS (111 aa)) constitute a CUB 1 domain. The N-linked (GlcNAc...) asparagine glycan is linked to N50. EGF-like domains are found at residues 138–168 (RFSLCPGGCQSHGQCQPPGVCACEPGWGGPD) and 170–203 (GLQECSAYCGSHGTCASPLGPCRCEPGFLGRACD). N-linked (GlcNAc...) asparagine glycosylation occurs at N217. Kelch repeat units lie at residues 241–287 (LLAV…AVAW), 290–338 (SLVL…AGHA), 346–399 (WLYV…FHAP), 402–453 (ALLV…FHTA), 459–511 (YMVV…APPS), and 525–575 (VLLV…SRDP). PSI domains follow at residues 561 to 613 (YCSM…GDCQ), 847 to 899 (SCTS…TLCP), and 900 to 947 (LCEE…EECP). N1048 carries an N-linked (GlcNAc...) asparagine glycan. The EGF-like 3; calcium-binding domain maps to 1074–1115 (DVDECRLGLARCHPRATCLNTPLSYECHCQRGYQGDGISHCN). Disulfide bonds link C1078-C1091, C1085-C1100, C1102-C1114, C1163-C1171, C1165-C1179, C1182-C1191, C1194-C1208, C1211-C1224, C1213-C1231, C1233-C1242, C1245-C1259, C1263-C1302, C1336-C1367, C1407-C1421, C1415-C1433, and C1435-C1444. Laminin EGF-like domains are found at residues 1163–1210 (CGCS…GCRP) and 1211–1261 (CQCN…SCFR). Positions 1263-1405 (CGGRALLTNV…WGFNASVGSA (143 aa)) constitute a CUB 2 domain. The N-linked (GlcNAc...) asparagine glycan is linked to N1271. A Phosphothreonine modification is found at T1353. Positions 1403–1445 (GSARCGSGGPGSCPVPQECVPQDGAAGAGLCRCPQGWAGPHCR) constitute an EGF-like 4 domain. Kelch repeat units follow at residues 1522 to 1570 (TLWM…SFHA), 1580 to 1626 (AMYL…HTLT), 1632 to 1679 (SLLL…SAVY), 1685 to 1735 (SLYV…VRGS), 1796 to 1843 (TMVV…ESVA), and 1852 to 1898 (RLYI…CHGA). The tract at residues 1726 to 1745 (RDRMRNVRGSSRGLGQVPGE) is disordered. PSI domains lie at 1876-1916 (PCRL…SPCS), 1924-1979 (ECRR…NDCR), 2060-2118 (PCHL…ESCS), and 2120-2177 (GCAQ…LSCP). A glycan (N-linked (GlcNAc...) asparagine) is linked at N2066. The 39-residue stretch at 2178–2216 (PEDECANGHHDCNETQNCHDQPHGYECSCKTGYTMDNMT) folds into the EGF-like 5 domain. Cystine bridges form between C2182/C2195 and C2189/C2204. N-linked (GlcNAc...) asparagine glycosylation is present at N2229. Intrachain disulfides connect C2253-C2261, C2255-C2270, C2273-C2282, C2285-C2299, C2380-C2389, C2382-C2397, C2399-C2424, and C2427-C2441. Laminin EGF-like domains follow at residues 2253-2301 (CRCN…TCRP) and 2380-2443 (CQCN…QCYR). The tract at residues 2523 to 2564 (TVHIQPPPAPPPPPPPADGGPRGAGDPGGAGASSGPGAPAEP) is disordered. Pro residues predominate over residues 2527-2540 (QPPPAPPPPPPPAD). Gly residues predominate over residues 2542–2556 (GPRGAGDPGGAGASS). The chain crosses the membrane as a helical span at residues 2648 to 2668 (LFVFFSVFFSCFFLFLSLCVL). Residues 2669-2845 (LWKAKQALDQ…SQDNLTSMSL (177 aa)) lie on the Cytoplasmic side of the membrane. A compositionally biased stretch (gly residues) spans 2817–2831 (GGGAGGSGHGTGAGR). The disordered stretch occupies residues 2817-2845 (GGGAGGSGHGTGAGRKGLLSQDNLTSMSL). Over residues 2836–2845 (SQDNLTSMSL) the composition is skewed to polar residues.

The protein localises to the membrane. Its function is as follows. Acts as a negative regulator of hedgehog signaling. This chain is Multiple epidermal growth factor-like domains protein 8 (MEGF8), found in Homo sapiens (Human).